Reading from the N-terminus, the 260-residue chain is 3-alpha-(or 20-beta)-hydroxysteroid dehydrogenase (260 aa).

Residues Arg-17, Met-19, Asp-38, Asp-61, Val-62, Asn-88, Tyr-153, Lys-157, Val-186, Thr-188, and Thr-191 each coordinate NAD(+). Catalysis depends on Tyr-153, which acts as the Proton acceptor.

Belongs to the short-chain dehydrogenases/reductases (SDR) family. As to quaternary structure, homotetramer.

The enzyme catalyses androstan-3alpha,17beta-diol + NAD(+) = 17beta-hydroxyandrostanone + NADH + H(+). The protein operates within lipid metabolism; steroid degradation. In terms of biological role, probably involved in steroid metabolism. The protein is 3-alpha-(or 20-beta)-hydroxysteroid dehydrogenase (fabG3) of Mycobacterium bovis (strain ATCC BAA-935 / AF2122/97).